The sequence spans 481 residues: MSYIKKLRARLDSGEISAVELTKEYLAKIKEQDKRINSVITLCEAEALKEAEDADAIISAGKQGLLTGIPILHKDLFCTKGIRTTAASKMLDNFVAPYDSTVTKNCKDQGMVTLGKLNMDEFAMGSTNEYSYYGAVSNPWDLERVPGGSSGGSAAAVAAGFAPISTGSDTGGSVRQPASFCGLTAMKPSYGSTSRFGMVAFASSFDQAGIFGHYAEDVAIMLDAIAGECEFDSTCVGVKQNHFTQDLEKDISGKVIGVDESLIKDLPAQIQEAVSKTLDNFKKLGAEIKSVKVPDLKEALSTYYIITPAEAAANLARYDGIRYGYRNPEARDLDELYRKSRTDGFGAEVKRRIMIGNYVLASSQYDSYYNKAQQLRKVMTDQINQIFTQVDAIFMPASPSEAFKKGDKLDPVSAYLSDIYTIPANISGLPAIAFPIGFANNLPVGGQLMAKAFNDNILTQMVVQYQKHYGIEEFILQQARI.

Catalysis depends on charge relay system residues Lys74 and Ser149. The Acyl-ester intermediate role is filled by Ser173.

Belongs to the amidase family. GatA subfamily. As to quaternary structure, heterotrimer of A, B and C subunits.

It carries out the reaction L-glutamyl-tRNA(Gln) + L-glutamine + ATP + H2O = L-glutaminyl-tRNA(Gln) + L-glutamate + ADP + phosphate + H(+). In terms of biological role, allows the formation of correctly charged Gln-tRNA(Gln) through the transamidation of misacylated Glu-tRNA(Gln) in organisms which lack glutaminyl-tRNA synthetase. The reaction takes place in the presence of glutamine and ATP through an activated gamma-phospho-Glu-tRNA(Gln). The chain is Glutamyl-tRNA(Gln) amidotransferase subunit A from Francisella tularensis subsp. tularensis (strain WY96-3418).